Consider the following 216-residue polypeptide: MOB kinase activator 3B (216 aa).

Positions 82, 87, 164, and 169 each coordinate Zn(2+).

This sequence belongs to the MOB1/phocein family.

Its function is as follows. Modulates LATS1 expression in the Hippo signaling pathway which plays a pivotal role in organ size control and tumor suppression by restricting proliferation and promoting apoptosis. The polypeptide is MOB kinase activator 3B (Homo sapiens (Human)).